We begin with the raw amino-acid sequence, 859 residues long: MERTRSKPVRNLPETIHSLLGLKSHMTSDWVKSVCNIAKNTSSTSKKEEDDFVSVDLQSIRDQLSALTVQVNDQNKLRRQILNEFLDLKGNIRVFCRVKPLGATEKLRPPVASDTRNVIIKLSETKRKTYNFDRVFQPDSSQDDVFLEIEPVIKSVIDGYNACIFAYGQTGTGKTYTMEGLPNSPGIVPRAIKGLFKQVEESNHMFTIHFSMLEIYMGNLKDLLLSEATKPISPIPPSLSIHTDPNGEIDIENLVKLKVDDFNEILRLYKVGCRSRATASTNSNSVSSRSHCMIRVSVTSLGAPERRRETNKIWLVDLGGSERVLKTRATGRRFDEGKAINLSLSALGDVINSLQRKNSHIPYRNSKLTQVLKDSLGQDSKTLMLVHISPKEDDLCETICSLNFATRAKNIHLGQDESTEEQAKKEAVMMNLQKMMEKIEQEREMSLRKMRNLNETLEKLTGKPHVIEEEEKDVVREVIHVTPKKPRNKSRRASDVFPSFMRPTASSNRRLSGADFSVTPNSSSFKSRRNSMISVRAESACLPVKKKKNRFDSACDSSDRSVSKSTSIMRQNTADDATVYSQDISECDIKLVVSEHKPKPLQMGPGSATKSRSNISNFEKDVMQKIGGTEFSRINSWLRSQSENRSYVLDKTQLPATHFLENLNRSLEKSPTQSFTTEKITGNELEGIEETKTNETVVNPTLMLKKLFELQCLCSAEEEDQILSRFPIPGYEDDDESRYPPILENDGFSQHIDNEWFGVNNYSADWERDSPATIPLLECEPDLKQLLPELGLDRSLKPRGLAVAEGAAPPLLRAQETLGERGKGPTFMQKLQALCFRILLGLGFMDVGFGNDFFNGLTK.

In terms of domain architecture, Kinesin motor spans N91–I411. Residue G168–T175 participates in ATP binding. Residues Q422–K463 are a coiled coil. Residues L511 to N530 form a disordered region. A compositionally biased stretch (polar residues) spans V518–N530.

Belongs to the TRAFAC class myosin-kinesin ATPase superfamily. Kinesin family. KIN-14 subfamily.

This is Kinesin-like protein KIN-14T from Arabidopsis thaliana (Mouse-ear cress).